Here is a 94-residue protein sequence, read N- to C-terminus: C-C motif chemokine 17 (94 aa).

Positions methionine 1–alanine 23 are cleaved as a signal peptide. 2 cysteine pairs are disulfide-bonded: cysteine 33/cysteine 57 and cysteine 34/cysteine 73.

The protein belongs to the intercrine beta (chemokine CC) family.

The protein localises to the secreted. Its function is as follows. Chemokine, which displays chemotactic activity for T lymphocytes, preferentially Th2 cells, but not monocytes or granulocytes. Therefore plays an important role in a wide range of inflammatory and immunological processes. Acts by binding to CCR4 at T-cell surface. Mediates GM-CSF/CSF2-driven pain and inflammation. In the brain, required to maintain the typical, highly branched morphology of hippocampal microglia under homeostatic conditions. May be important for the appropriate adaptation of microglial morphology and synaptic plasticity to acute lipopolysaccharide (LPS)-induced neuroinflammation. Plays a role in wound healing, mainly by inducing fibroblast migration into the wound. This Macaca mulatta (Rhesus macaque) protein is C-C motif chemokine 17 (CCL17).